The chain runs to 659 residues: Threonine--tRNA ligase (659 aa).

The TGS domain maps to 1–60 (MTVYLPDGKPLELPEGATAKDVARALGEGWERRAVGAIVDGELYDLLKPLPQGAKVRLLT). Catalytic regions lie at residues 234–548 (TAEE…EHFA) and 252–552 (DHRR…GDFP). Zn(2+)-binding residues include Cys-349, His-400, and His-529.

This sequence belongs to the class-II aminoacyl-tRNA synthetase family. In terms of assembly, homodimer. It depends on Zn(2+) as a cofactor.

It is found in the cytoplasm. The enzyme catalyses tRNA(Thr) + L-threonine + ATP = L-threonyl-tRNA(Thr) + AMP + diphosphate + H(+). In terms of biological role, catalyzes the attachment of threonine to tRNA(Thr) in a two-step reaction: L-threonine is first activated by ATP to form Thr-AMP and then transferred to the acceptor end of tRNA(Thr). Also edits incorrectly charged L-seryl-tRNA(Thr). This is Threonine--tRNA ligase from Thermus thermophilus (strain ATCC 27634 / DSM 579 / HB8).